Here is a 603-residue protein sequence, read N- to C-terminus: Granule-bound starch synthase 1, chloroplastic/amyloplastic (603 aa).

The transit peptide at 1-75 directs the protein to the chloroplast; that stretch reads MATITGSSMP…SEKSLGKIVC (75 aa). Lys91 lines the ADP-alpha-D-glucose pocket.

It belongs to the glycosyltransferase 1 family. Bacterial/plant glycogen synthase subfamily. As to expression, expressed in pods and leaves. No expression in flowers or stipules.

The protein localises to the plastid. Its subcellular location is the chloroplast. The protein resides in the amyloplast. It catalyses the reaction an NDP-alpha-D-glucose + [(1-&gt;4)-alpha-D-glucosyl](n) = [(1-&gt;4)-alpha-D-glucosyl](n+1) + a ribonucleoside 5'-diphosphate + H(+). It participates in glycan biosynthesis; starch biosynthesis. May be responsible for the synthesis of amylose. This chain is Granule-bound starch synthase 1, chloroplastic/amyloplastic, found in Pisum sativum (Garden pea).